A 127-amino-acid chain; its full sequence is MKVMTLNFLTCAVKNCKSSNDSFPLHPKEAELAKDDIEINPQLLINVLPRIDWAALRTTSTELGFPTLPEQPPSPEDLQSDEALLKELHELLMETQMMEGKLVCGHCGHEYAVKNGVANFLLPSHLV.

The TRM112 domain maps to 2–123; the sequence is KVMTLNFLTC…KNGVANFLLP (122 aa).

This sequence belongs to the TRM112 family. In terms of assembly, heterodimer of mtq2-rmt-1/trm112, forming the eRF1 methyltransferase. Rmt-1/trm112 is necessary for the solubility and activity of the catalytic subunit mtq2. Interacts with trm11; required for full tRNA methyltransferase activity. Interacts with bud23; required for full rRNA methyltransferase activity.

It is found in the cytoplasm. The protein resides in the nucleus. Functionally, acts as an activator of both rRNA/tRNA and protein methyltransferases. Together with methyltransferase mtq2, required for the methylation of eRF1 on 'Gln-182'. Together with methyltransferase trm11, required for the formation of 2-methylguanosine at position 10 (m2G10) in tRNA. Together with methyltransferase bud23, required for the formation of a 7-methylguanine in 18S rRNA. Involved in biogenesis of both 40S and 60S ribosomal subunits. The protein is Multifunctional methyltransferase subunit trm112 (rmt-1) of Neurospora crassa (strain ATCC 24698 / 74-OR23-1A / CBS 708.71 / DSM 1257 / FGSC 987).